Here is a 1342-residue protein sequence, read N- to C-terminus: DNA-directed RNA polymerase subunit beta (1342 aa).

Belongs to the RNA polymerase beta chain family. The RNAP catalytic core consists of 2 alpha, 1 beta, 1 beta' and 1 omega subunit. When a sigma factor is associated with the core the holoenzyme is formed, which can initiate transcription.

The catalysed reaction is RNA(n) + a ribonucleoside 5'-triphosphate = RNA(n+1) + diphosphate. DNA-dependent RNA polymerase catalyzes the transcription of DNA into RNA using the four ribonucleoside triphosphates as substrates. This Pectobacterium atrosepticum (strain SCRI 1043 / ATCC BAA-672) (Erwinia carotovora subsp. atroseptica) protein is DNA-directed RNA polymerase subunit beta.